A 418-amino-acid polypeptide reads, in one-letter code: Gamma-glutamyl phosphate reductase (418 aa).

This sequence belongs to the gamma-glutamyl phosphate reductase family.

The protein resides in the cytoplasm. The enzyme catalyses L-glutamate 5-semialdehyde + phosphate + NADP(+) = L-glutamyl 5-phosphate + NADPH + H(+). Its pathway is amino-acid biosynthesis; L-proline biosynthesis; L-glutamate 5-semialdehyde from L-glutamate: step 2/2. In terms of biological role, catalyzes the NADPH-dependent reduction of L-glutamate 5-phosphate into L-glutamate 5-semialdehyde and phosphate. The product spontaneously undergoes cyclization to form 1-pyrroline-5-carboxylate. This chain is Gamma-glutamyl phosphate reductase, found in Agathobacter rectalis (strain ATCC 33656 / DSM 3377 / JCM 17463 / KCTC 5835 / VPI 0990) (Eubacterium rectale).